The following is a 2082-amino-acid chain: Autophagy-related protein 2 (2082 aa).

Disordered stretches follow at residues 108-130, 144-175, 285-343, 365-435, 462-527, 580-636, 662-702, 912-943, 1435-1454, and 2062-2082; these read SADQ…LPNP, EEKE…EEFG, TAPP…VPEA, TEET…STFN, TGSF…RDGD, RSQC…SFES, SRDG…RSQD, SGVK…RQPS, DAAS…QPAN, and GAGN…YKRH. Basic and acidic residues predominate over residues 111–126; that stretch reads QDTHRSPTDDTGDDHV. Polar residues-rich tracts occupy residues 152–162 and 311–329; these read AISSQSQVLQH and PELN…QSTI. 2 stretches are compositionally biased toward basic and acidic residues: residues 397 to 430 and 489 to 500; these read IDSH…RLHD and QHAEEPQHEVRA. A compositionally biased stretch (low complexity) spans 503-522; sequence SGSQPAPPSEEGSSSSTSNS. Basic and acidic residues-rich tracts occupy residues 588-597, 622-633, and 690-702; these read NRTRDEKDET, RTAHSEATDKGS, and HSER…RSQD. Positions 2070 to 2082 are enriched in basic and acidic residues; sequence SNRRKMEDKYKRH.

The protein belongs to the ATG2 family.

It is found in the preautophagosomal structure membrane. The protein resides in the endoplasmic reticulum membrane. The catalysed reaction is a 1,2-diacyl-sn-glycero-3-phosphocholine(in) = a 1,2-diacyl-sn-glycero-3-phosphocholine(out). The enzyme catalyses a 1,2-diacyl-sn-glycero-3-phospho-L-serine(in) = a 1,2-diacyl-sn-glycero-3-phospho-L-serine(out). It catalyses the reaction a 1,2-diacyl-sn-glycero-3-phosphoethanolamine(in) = a 1,2-diacyl-sn-glycero-3-phosphoethanolamine(out). In terms of biological role, lipid transfer protein required for autophagosome completion and peroxisome degradation. Tethers the edge of the isolation membrane (IM) to the endoplasmic reticulum (ER) and mediates direct lipid transfer from ER to IM for IM expansion. Atg2 binds to the ER exit site (ERES), which is the membrane source for autophagosome formation, using basic residues in its N-terminal region (NR) and to the expanding edge of the IM through its C-terminal region. The latter binding is assisted by an atg18-PtdIns3P interaction. Atg2 then extracts phospholipids from the membrane source using its NR and transfers them to atg9 to the IM through its predicted beta-sheet-rich structure for membrane expansion. This Aspergillus terreus (strain NIH 2624 / FGSC A1156) protein is Autophagy-related protein 2 (atg2).